We begin with the raw amino-acid sequence, 595 residues long: Inactive glycosyltransferase 25 family member 3 (595 aa).

The signal sequence occupies residues 1 to 22; sequence MRAARAAPLLQLLLLLGPWLEA. 4 N-linked (GlcNAc...) asparagine glycosylation sites follow: Asn75, Asn153, Asn237, and Asn360. Positions 548 to 595 are disordered; it reads DTETSSPWDDDSGRLISWSGSQKTLRSPRLDLTGSSGHSLQPQPRDEL. Residues 580-589 are compositionally biased toward polar residues; it reads TGSSGHSLQP. The Prevents secretion from ER signature appears at 592–595; that stretch reads RDEL.

The protein belongs to the glycosyltransferase 25 family. As to expression, ubiquitous. Highly expressed in secretory and nervous tissues.

The protein resides in the endoplasmic reticulum lumen. Probable cell adhesion protein involved in leukocyte transmigration across the blood-brain barrier. Does not express any beta-galactosyltransferase activity in vitro. This Homo sapiens (Human) protein is Inactive glycosyltransferase 25 family member 3 (CERCAM).